The sequence spans 487 residues: Proline--tRNA ligase (487 aa).

It belongs to the class-II aminoacyl-tRNA synthetase family. ProS type 3 subfamily. In terms of assembly, homodimer.

The protein resides in the cytoplasm. The catalysed reaction is tRNA(Pro) + L-proline + ATP = L-prolyl-tRNA(Pro) + AMP + diphosphate. Its function is as follows. Catalyzes the attachment of proline to tRNA(Pro) in a two-step reaction: proline is first activated by ATP to form Pro-AMP and then transferred to the acceptor end of tRNA(Pro). This Pyrobaculum neutrophilum (strain DSM 2338 / JCM 9278 / NBRC 100436 / V24Sta) (Thermoproteus neutrophilus) protein is Proline--tRNA ligase.